A 198-amino-acid chain; its full sequence is GTP cyclohydrolase-2 (198 aa).

Residue 52–56 participates in GTP binding; the sequence is RMHSE. Residues Cys57, Cys68, and Cys70 each coordinate Zn(2+). GTP is bound by residues Gln73, 94–96, and Thr116; that span reads EGR. Catalysis depends on Asp128, which acts as the Proton acceptor. Arg130 (nucleophile) is an active-site residue. Residues Thr151 and Lys156 each coordinate GTP.

This sequence belongs to the GTP cyclohydrolase II family. It depends on Zn(2+) as a cofactor.

It carries out the reaction GTP + 4 H2O = 2,5-diamino-6-hydroxy-4-(5-phosphoribosylamino)-pyrimidine + formate + 2 phosphate + 3 H(+). It functions in the pathway cofactor biosynthesis; riboflavin biosynthesis; 5-amino-6-(D-ribitylamino)uracil from GTP: step 1/4. In terms of biological role, catalyzes the conversion of GTP to 2,5-diamino-6-ribosylamino-4(3H)-pyrimidinone 5'-phosphate (DARP), formate and pyrophosphate. This is GTP cyclohydrolase-2 from Vibrio cholerae serotype O1 (strain ATCC 39315 / El Tor Inaba N16961).